The sequence spans 802 residues: uncharacterized protein (802 aa).

In terms of domain architecture, EF-hand 1 spans 6 to 41 (SRSEKVKRIFQQFDGNLDGGLSREEMSALVVAVNPR). TPR repeat units follow at residues 229–262 (FDGH…QPTD), 264–296 (RPHF…AESG), 305–338 (PQIY…CPTH), 339–372 (YRAL…KPDY), 373–406 (ADAH…KPGH), 407–440 (VDAL…WPNH), and 442–474 (RAQL…TNRV). In terms of domain architecture, EF-hand 2 spans 595 to 630 (AIKAINEKILSVLDDSGSGRVDLGMFYAVIAPLCGG).

This is an uncharacterized protein from Arabidopsis thaliana (Mouse-ear cress).